A 92-amino-acid polypeptide reads, in one-letter code: Small ribosomal subunit protein uS19 (92 aa).

The protein belongs to the universal ribosomal protein uS19 family.

Its function is as follows. Protein S19 forms a complex with S13 that binds strongly to the 16S ribosomal RNA. This chain is Small ribosomal subunit protein uS19, found in Methylobacterium sp. (strain 4-46).